The sequence spans 125 residues: Small ribosomal subunit protein eS8 (125 aa).

This sequence belongs to the eukaryotic ribosomal protein eS8 family. Part of the 30S ribosomal subunit.

This chain is Small ribosomal subunit protein eS8, found in Methanosarcina barkeri (strain Fusaro / DSM 804).